A 222-amino-acid chain; its full sequence is WAP four-disulfide core domain protein 1 (222 aa).

Residues 1 to 32 (MDSRMLSDQRFCRRIFAAALCVLVLLADSGCA) form the signal peptide. Residues 61–110 (HYQKNDRCPPPPQTLPDRACEVPSCRSDSECERHKRCCYNGCIYACLESV) form the WAP domain. Intrachain disulfides connect Cys-68–Cys-98, Cys-80–Cys-102, Cys-85–Cys-97, and Cys-91–Cys-106.

The protein resides in the secreted. Its function is as follows. Has growth inhibitory activity. The protein is WAP four-disulfide core domain protein 1 (WFDC1) of Gallus gallus (Chicken).